The chain runs to 193 residues: Early light-induced protein 2, chloroplastic (193 aa).

The transit peptide at 1–43 directs the protein to the chloroplast; sequence MATASFNMQSVFAAPSGVLTTRNIRNTNQLFFKRIAPVGVRCM. The interval 46-80 is disordered; that stretch reads GDPIKEDPSVPSTSTSATPPQMPQSPPPPVSKPKV. The segment covering 54–64 has biased composition (low complexity); the sequence is SVPSTSTSATP. The span at 65–76 shows a compositional bias: pro residues; sequence PQMPQSPPPPVS. Transmembrane regions (helical) follow at residues 102 to 122, 129 to 149, and 173 to 193; these read LAMV…ENVF, GVGW…VPLF, and FAML…GTLV.

Belongs to the ELIP/psbS family.

Its subcellular location is the plastid. It is found in the chloroplast thylakoid membrane. Probably involved in the integration of pigments into the mature light-harvesting pigment-protein complexes. Light-harvesting chlorophyll (LHC) a/b-binding protein required to ensure a high rate of chlorophyll accumulation during deetiolation in continuous high light. Involved in seed germination. May fulfill a photoprotective functions. Prevents excess accumulation of free chlorophyll by inhibiting the entire chlorophyll biosynthesis pathway (e.g. 5-aminolevulinate synthesis and Mg-protoporphyrin IX chelatase activity), and hence prevent photooxidative stress. The sequence is that of Early light-induced protein 2, chloroplastic from Arabidopsis thaliana (Mouse-ear cress).